We begin with the raw amino-acid sequence, 240 residues long: Ribosomal RNA small subunit methyltransferase G (240 aa).

S-adenosyl-L-methionine-binding positions include glycine 80, phenylalanine 85, aspartate 103–serine 105, alanine 131–glutamate 132, and arginine 150.

The protein belongs to the methyltransferase superfamily. RNA methyltransferase RsmG family.

It localises to the cytoplasm. In terms of biological role, specifically methylates the N7 position of a guanine in 16S rRNA. This Thermoanaerobacter pseudethanolicus (strain ATCC 33223 / 39E) (Clostridium thermohydrosulfuricum) protein is Ribosomal RNA small subunit methyltransferase G.